The sequence spans 125 residues: Flagellar protein FliT (125 aa).

The segment at 1-50 (MDNKMDLLSAYQRILSLSEQMLNLAKNEKWDELVDMEITYLKAVEVISHS) is required for homodimerization. Positions 60–98 (LQQKMTNILQIILDNENEIKKLLQKRLDELSKLIKQASQ) are fliD binding.

The protein belongs to the FliT family. As to quaternary structure, homodimer. Interacts with FliD and FlhC.

It is found in the cytoplasm. Its subcellular location is the cytosol. Dual-function protein that regulates the transcription of class 2 flagellar operons and that also acts as an export chaperone for the filament-capping protein FliD. As a transcriptional regulator, acts as an anti-FlhDC factor; it directly binds FlhC, thus inhibiting the binding of the FlhC/FlhD complex to class 2 promoters, resulting in decreased expression of class 2 flagellar operons. As a chaperone, effects FliD transition to the membrane by preventing its premature polymerization, and by directing it to the export apparatus. This Photorhabdus laumondii subsp. laumondii (strain DSM 15139 / CIP 105565 / TT01) (Photorhabdus luminescens subsp. laumondii) protein is Flagellar protein FliT.